The primary structure comprises 66 residues: Large ribosomal subunit protein uL29 (66 aa).

It belongs to the universal ribosomal protein uL29 family.

This chain is Large ribosomal subunit protein uL29, found in Helicobacter pylori (strain P12).